A 599-amino-acid polypeptide reads, in one-letter code: Estrogen receptor (599 aa).

The modulating (transactivation AF-1); mediates interaction with MACROD1 stretch occupies residues 1 to 188 (MTMTLHTKAS…IMESAKETRY (188 aa)). O-linked (GlcNAc) serine glycosylation is present at S10. Positions 35–47 (MERALGEVYVDNS) are required for interaction with NCOA1. Positions 35-178 (MERALGEVYV…LSSSNEKGNM (144 aa)) are interaction with DDX5; self-association. O-linked (GlcNAc) threonine glycosylation is present at T50. Phosphoserine; by CDK2 is present on residues S108 and S110. Position 122 is a phosphoserine (S122). The disordered stretch occupies residues 147-175 (DTGPPAFYRSNSDNRRQNGRERLSSSNEK). The span at 158-169 (SDNRRQNGRERL) shows a compositional bias: basic and acidic residues. Position 171 is a phosphoserine; by CK2 (S171). 2 NR C4-type zinc fingers span residues 189 to 209 (CAVCNDYASGYHYGVWSCEGC) and 225 to 249 (CPATNQCTIDKNRRKSCQACRLRKC). The nuclear receptor DNA-binding region spans 189–254 (CAVCNDYASG…RLRKCYEVGM (66 aa)). The mediates interaction with DNTTIP2 stretch occupies residues 189-314 (CAVCNDYASG…TKKNSPALSL (126 aa)). Positions 255 to 314 (MKGGIRKDRRGGRMLKHKRQRDDLEGRNEMGASGDMRAANLWPSPLVIKHTKKNSPALSL) are hinge. Asymmetric dimethylarginine; by PRMT1 is present on R264. The segment at 266–599 (GRMLKHKRQR…PEAEGFPNTI (334 aa)) is interaction with AKAP13. The interval 268 to 599 (MLKHKRQRDD…PEAEGFPNTI (332 aa)) is self-association. In terms of domain architecture, NR LBD spans 315 to 551 (TADQMVSALL…DLLLEMLDAH (237 aa)). A transactivation AF-2 region spans residues 315 to 599 (TADQMVSALL…PEAEGFPNTI (285 aa)). Residues E357 and R398 each contribute to the 17beta-estradiol site. Residue C451 is the site of S-palmitoyl cysteine attachment. H528 contributes to the 17beta-estradiol binding site. Residue Y541 is modified to Phosphotyrosine; by Tyr-kinases. A disordered region spans residues 557–581 (ASRMGVPPEEPSQTQLATTSSTSAH). Low complexity predominate over residues 568 to 581 (SQTQLATTSSTSAH). The O-linked (GlcNAc) threonine glycan is linked to T575.

It belongs to the nuclear hormone receptor family. NR3 subfamily. Interacts with BCAS3. Binds DNA as a homodimer. Can form a heterodimer with ESR2. Interacts with coactivator NCOA5. Interacts with PELP1, the interaction is enhanced by 17-beta-estradiol; the interaction increases ESR1 transcriptional activity. Interacts with NCOA7; the interaction is ligand-inducible. Interacts with AKAP13, CUEDC2, HEXIM1, KDM5A, MAP1S, SMARD1, and UBE1C. Interacts with MUC1; the interaction is stimulated by 7 beta-estradiol (E2) and enhances ESR1-mediated transcription. Interacts with DNTTIP2, and UIMC1. Interacts with KMT2D/MLL2. Interacts with ATAD2; the interaction is enhanced by estradiol. Interacts with KIF18A and LDB1. Interacts with RLIM (via its C-terminus). Interacts with MACROD1. Interacts with SH2D4A and PLCG. Interacts with SH2D4A; the interaction blocks binding to PLCG and inhibits estrogen-induced cell proliferation. Interacts with DYNLL1. Interacts with CCDC62; the interaction requires estradiol and appears to enhance the transcription of target genes. Interacts with NR2C1; the interaction prevents homodimerization of ESR1 and suppresses its transcriptional activity and cell growth. Interacts with DNAAF4. Interacts with PRMT2. Interacts with RBFOX2. Interacts with EP300; the interaction is estrogen-dependent and enhanced by CITED1. Interacts with CITED1; the interaction is estrogen-dependent. Interacts with FAM120B, FOXL2, PHB2 and SLC30A9. Interacts with coactivators NCOA3 and NCOA6. Interacts with STK3/MST2 only in the presence of SAV1 and vice-versa. Binds to CSNK1D. Interacts with NCOA2; NCOA2 can interact with ESR1 AF-1 and AF-2 domains simultaneously and mediate their transcriptional synergy. Interacts with DDX5. Interacts with NCOA1; the interaction seems to require a self-association of N-terminal and C-terminal regions. Interacts with ZNF366, DDX17, NFKB1, RELA, SP1 and SP3. Interacts with NRIP1. Interacts with GPER1; the interaction occurs in an estrogen-dependent manner. Interacts with CLOCK and the interaction is stimulated by estrogen. Interacts with BCAS3. Interacts with TRIP4 (ufmylated); estrogen dependent. Interacts with LMTK3; the interaction phosphorylates ESR1 (in vitro) and protects it against proteasomal degradation. Interacts with CCAR2 (via N-terminus) in a ligand-independent manner. Interacts with ZFHX3. Interacts with SFR1 in a ligand-dependent and -independent manner. Interacts with DCAF13, LATS1 and DCAF1; regulates ESR1 ubiquitination and ubiquitin-mediated proteasomal degradation. Interacts (via DNA-binding domain) with POU4F2 isoform 2 (C-terminus); this interaction increases the estrogen receptor ESR1 transcriptional activity in a DNA- and ligand 17-beta-estradiol-independent manner. Interacts with ESRRB isoform 1. Interacts with UBE3A and WBP2. Interacts with GTF2B. Interacts with RBM39. In the absence of hormonal ligand, interacts with TACC1. Interacts with PI3KR1 or PI3KR2 and PTK2/FAK1. Interacts with SRC. Interacts with BAG1; the interaction is promoted in the absence of estradiol (17-beta-estradiol/E2). Interacts with and ubiquitinated by STUB1; the interaction is promoted in the absence of estradiol (17-beta-estradiol/E2). Interacts with NEDD8. Phosphorylated by cyclin A/CDK2 and CK1. Phosphorylation probably enhances transcriptional activity. Dephosphorylation at Ser-122 by PPP5C inhibits its transactivation activity. Phosphorylated by LMTK3 (in vitro). Post-translationally, ubiquitinated. Deubiquitinated by OTUB1. In terms of processing, palmitoylated at Cys-451 by ZDHHC7 and ZDHHC21. This modification is required for plasma membrane targeting and for rapid intracellular signaling via ERK and AKT kinases and cAMP generation, but not for signaling mediated by the nuclear hormone receptor. Ubiquitinated; regulated by LATS1 via DCAF1 it leads to ESR1 proteasomal degradation. Deubiquitinated by OTUB1. Ubiquitinated by STUB1/CHIP; in the CA1 hippocampal region following loss of endogenous circulating estradiol (17-beta-estradiol/E2). Ubiquitinated by UBR5, leading to its degradation: UBR5 specifically recognizes and binds ligand-bound ESR1 when it is not associated with coactivators (NCOAs). In presence of NCOAs, the UBR5-degron is not accessible, preventing its ubiquitination and degradation. Post-translationally, dimethylated by PRMT1 at Arg-264. The methylation may favor cytoplasmic localization. Demethylated by JMJD6 at Arg-264.

The protein resides in the nucleus. Its subcellular location is the cytoplasm. It is found in the golgi apparatus. The protein localises to the cell membrane. Functionally, nuclear hormone receptor. The steroid hormones and their receptors are involved in the regulation of eukaryotic gene expression and affect cellular proliferation and differentiation in target tissues. Ligand-dependent nuclear transactivation involves either direct homodimer binding to a palindromic estrogen response element (ERE) sequence or association with other DNA-binding transcription factors, such as AP-1/c-Jun, c-Fos, ATF-2, Sp1 and Sp3, to mediate ERE-independent signaling. Ligand binding induces a conformational change allowing subsequent or combinatorial association with multiprotein coactivator complexes through LXXLL motifs of their respective components. Mutual transrepression occurs between the estrogen receptor (ER) and NF-kappa-B in a cell-type specific manner. Decreases NF-kappa-B DNA-binding activity and inhibits NF-kappa-B-mediated transcription from the IL6 promoter and displace RELA/p65 and associated coregulators from the promoter. Recruited to the NF-kappa-B response element of the CCL2 and IL8 promoters and can displace CREBBP. Present with NF-kappa-B components RELA/p65 and NFKB1/p50 on ERE sequences. Can also act synergistically with NF-kappa-B to activate transcription involving respective recruitment adjacent response elements; the function involves CREBBP. Can activate the transcriptional activity of TFF1. Also mediates membrane-initiated estrogen signaling involving various kinase cascades. Essential for MTA1-mediated transcriptional regulation of BRCA1 and BCAS3. Maintains neuronal survival in response to ischemic reperfusion injury when in the presence of circulating estradiol (17-beta-estradiol/E2). The sequence is that of Estrogen receptor (Esr1) from Mus musculus (Mouse).